The primary structure comprises 322 residues: MSKKIGILTSGGDAPGMNSAISFLTKSALSLGFEPYLIFDGYSGIIARKILPAKNFPYNGISSFGGTAIGSSRFPEFKKEEVQNKAVEILSEIGISSLVVVGGDGTYNGGYKLHLKGIKVIALPGTIDNDIQFTDYTIGFDTALNTIVETIDKLRDTANSHRRCFVVEVMGRHCQDLALYSAMATGSEILITNTNILSPEEVSQKVLEQFAKGKPSVIVTITENILPNLKEFAAKIEELTKISTRSLEVGHTQRGGRPSAFDRILAAKMAMKAMELINQDKSGLAISYLDGKIQTFDIAKVVSNPVRKTNDLVLEINKINQN.

ATP is bound by residues glycine 12, 73-74 (RF), and 103-106 (GDGT). Mg(2+) is bound at residue aspartate 104. Residue 126-128 (TID) participates in substrate binding. Aspartate 128 acts as the Proton acceptor in catalysis. An ADP-binding site is contributed by arginine 155. Substrate-binding positions include arginine 163 and 170-172 (MGR). ADP-binding positions include 186–188 (GSE), lysine 212, and 214–216 (KPS). Substrate-binding positions include glutamate 223, arginine 245, and 251 to 254 (HTQR).

The protein belongs to the phosphofructokinase type A (PFKA) family. ATP-dependent PFK group I subfamily. Prokaryotic clade 'B1' sub-subfamily. Homotetramer. The cofactor is Mg(2+).

It localises to the cytoplasm. It carries out the reaction beta-D-fructose 6-phosphate + ATP = beta-D-fructose 1,6-bisphosphate + ADP + H(+). The protein operates within carbohydrate degradation; glycolysis; D-glyceraldehyde 3-phosphate and glycerone phosphate from D-glucose: step 3/4. Allosterically activated by ADP and other diphosphonucleosides, and allosterically inhibited by phosphoenolpyruvate. In terms of biological role, catalyzes the phosphorylation of D-fructose 6-phosphate to fructose 1,6-bisphosphate by ATP, the first committing step of glycolysis. In Mesomycoplasma hyopneumoniae (strain 7448) (Mycoplasma hyopneumoniae), this protein is ATP-dependent 6-phosphofructokinase.